The primary structure comprises 1400 residues: Tiny macrocysts protein C (1400 aa).

Helical transmembrane passes span 59 to 79 (ILTI…GFKQ), 112 to 132 (IFFW…WYVA), 152 to 172 (FVST…LIGL), 196 to 216 (ANLS…IVGF), 240 to 260 (FDVY…LVDF), 266 to 286 (SIVY…ILPY), 296 to 316 (SGFY…MGIN), and 320 to 340 (TATT…IGYF). Disordered regions lie at residues 367–393 (FNEI…SKVT) and 683–712 (ERSG…RGKY). Basic and acidic residues predominate over residues 369 to 386 (EITKNEKSKTGDSKEKES). Helical transmembrane passes span 726–746 (WLMI…LIVL), 975–995 (TMLY…AVLF), 1162–1182 (VLAI…TYSV), and 1342–1362 (VLTS…LLLF).

Its subcellular location is the membrane. This chain is Tiny macrocysts protein C (tmcC), found in Dictyostelium discoideum (Social amoeba).